The primary structure comprises 1079 residues: Adhesion G-protein coupled receptor F3 (1079 aa).

A signal peptide spans 1–25 (MVCSAAPLLLLATTLPLLGSPVAQA). The Extracellular portion of the chain corresponds to 26–775 (SQPVSETGVR…EEPALALLTQ (750 aa)). 6 N-linked (GlcNAc...) asparagine glycosylation sites follow: asparagine 188, asparagine 264, asparagine 301, asparagine 382, asparagine 441, and asparagine 648. In terms of domain architecture, GAIN-B spans 599-765 (HPFAFSLPNV…SVLMSPHTVP (167 aa)). 2 disulfide bridges follow: cysteine 715-cysteine 747 and cysteine 734-cysteine 749. Residues 715–765 (CVFWDHSLFQGRGGWSKEGCQAQVASASPTAQCLCQHLTAFSVLMSPHTVP) are GPS. A helical transmembrane segment spans residues 776–796 (VGLGASILALLVCLGVYWLVW). At 797 to 811 (RVVVRNKISYFRHAA) the chain is on the cytoplasmic side. A helical membrane pass occupies residues 812–832 (LLNMVFCLLAADTCFLGAPFL). Residues 833-851 (SPGPRSPLCLAAAFLCHFL) lie on the Extracellular side of the membrane. A helical transmembrane segment spans residues 852 to 874 (YLATFFWMLAQALVLAHQLLFVF). The Cytoplasmic portion of the chain corresponds to 875–881 (HQLAKHR). The chain crosses the membrane as a helical span at residues 882 to 902 (VLPLMVLLGYLCPLGLAGVTL). The Extracellular portion of the chain corresponds to 903 to 928 (GLYLPQGQYLREGECWLDGKGGALYT). A helical transmembrane segment spans residues 929-949 (FVGPVLAIIGVNGLVLAMAML). Residues 950–973 (KLLRPSLSEGPPAEKRQALLGVIK) are Cytoplasmic-facing. Residues 974-994 (ALLILTPIFGLTWGLGLATLL) form a helical membrane-spanning segment. Topologically, residues 995–1002 (EEVSTVPH) are extracellular. Residues 1003–1023 (YIFTILNTLQGVFILLFGCLM) traverse the membrane as a helical segment. Residues 1024 to 1079 (DRKIQEALRKRFCRAQAPSSTISLVSCCLQILSCASKSMSEGIPWPSSEDMGTARS) are Cytoplasmic-facing.

The protein belongs to the G-protein coupled receptor 2 family. Adhesion G-protein coupled receptor (ADGR) subfamily. As to quaternary structure, heterodimer of 2 chains generated by proteolytic processing; the large extracellular N-terminal fragment and the membrane-bound C-terminal fragment predominantly remain associated and non-covalently linked. In terms of processing, autoproteolytically processed at the GPS region of the GAIN-B domain; this cleavage modulates receptor activity.

It localises to the membrane. In terms of biological role, orphan receptor. The protein is Adhesion G-protein coupled receptor F3 (ADGRF3) of Homo sapiens (Human).